The sequence spans 331 residues: Tungstate uptake system ATP-binding protein TupC (331 aa).

In terms of domain architecture, ABC transporter spans 2–230 (IEISNLFFNY…NQGVKFCNFI (229 aa)). 34 to 41 (GANGSGKS) is an ATP binding site.

The protein belongs to the ABC transporter superfamily. The complex is composed of two ATP-binding proteins (TupC), two transmembrane proteins (TupB) and a solute-binding protein (TupA).

It catalyses the reaction tungstate(in) + ATP + H2O = tungstate(out) + ADP + phosphate + H(+). Part of an ABC transporter complex involved in ultra-high affinity tungstate uptake. Probably responsible for energy coupling to the transport system. The sequence is that of Tungstate uptake system ATP-binding protein TupC from Campylobacter jejuni subsp. jejuni serotype O:2 (strain ATCC 700819 / NCTC 11168).